Consider the following 283-residue polypeptide: Pre-protein-C8 (283 aa).

Positions 1–40 (MKEDNNTSEESGRINRRNVLKTVGAAGLFAAGSTGMAAAA) form a signal peptide, tat-type signal. Residues 61–75 (ARELAKTPAFRELAQ) are helix-loop-helix (HLH) region.

Immunity protein HalI interacts with Halocin-C8; the interaction is direct. In terms of processing, predicted to be exported by the Tat system. The position of the signal peptide cleavage has not been experimentally proven.

The protein localises to the secreted. The protein resides in the cell membrane. Has antibacterial activity against a wide variety of haloarchaeons. Causes cell lysis and death, possibly by disrupting the cell wall. Its function is as follows. Acts as an immunity protein for halocin-C8. Able to block the halocin-C8 activity by sequestering the activity of halocin-C8 through specific and direct binding. In Halobacterium sp. (strain AS7092), this protein is Pre-protein-C8 (proC8).